A 427-amino-acid chain; its full sequence is 3-phosphoshikimate 1-carboxyvinyltransferase (427 aa).

Residues Lys22, Ser23, and Arg27 each coordinate 3-phosphoshikimate. Lys22 lines the phosphoenolpyruvate pocket. Phosphoenolpyruvate contacts are provided by Gly96 and Arg124. Residues Ser169, Ser170, Gln171, Ser197, Asp313, Asn336, and Lys340 each coordinate 3-phosphoshikimate. Gln171 serves as a coordination point for phosphoenolpyruvate. Residue Asp313 is the Proton acceptor of the active site. Phosphoenolpyruvate-binding residues include Arg344, Arg386, and Lys411.

This sequence belongs to the EPSP synthase family. In terms of assembly, monomer.

The protein localises to the cytoplasm. It carries out the reaction 3-phosphoshikimate + phosphoenolpyruvate = 5-O-(1-carboxyvinyl)-3-phosphoshikimate + phosphate. The protein operates within metabolic intermediate biosynthesis; chorismate biosynthesis; chorismate from D-erythrose 4-phosphate and phosphoenolpyruvate: step 6/7. Catalyzes the transfer of the enolpyruvyl moiety of phosphoenolpyruvate (PEP) to the 5-hydroxyl of shikimate-3-phosphate (S3P) to produce enolpyruvyl shikimate-3-phosphate and inorganic phosphate. In Salmonella typhi, this protein is 3-phosphoshikimate 1-carboxyvinyltransferase.